Reading from the N-terminus, the 959-residue chain is Oxysterol-binding protein-related protein 6 (959 aa).

Residues 1–60 (MSSDEKGISPAHKTSTPTHRSASSSTSSQRESRQSIHVLERTASSSTEPSVSRQLLEPEP) are disordered. At Ser2 the chain carries N-acetylserine. Over residues 14 to 29 (TSTPTHRSASSSTSSQ) the composition is skewed to low complexity. Residues 30-40 (RESRQSIHVLE) are compositionally biased toward basic and acidic residues. Phosphoserine is present on Ser35. Residues 42-53 (TASSSTEPSVSR) show a composition bias toward polar residues. The PH domain occupies 86-181 (PDRHEGFMLK…WVSKLRHHRL (96 aa)). A phosphoserine mark is found at Ser190 and Ser290.

Belongs to the OSBP family. Homodimer. Interacts with OSBPL3. Expressed in skin, respiratory epithelium, small intestine epithelium, pancreas, striated muscle, brain, spinal ganglia, and nervous plexus of the intestine (at protein level). In the brain, specifically in the cerebellum, it is expressed in Purkinje and granule cells. Expressed in hepatocytes and macrophages.

It is found in the nucleus envelope. Its subcellular location is the cytoplasm. The protein resides in the cytosol. The protein localises to the endoplasmic reticulum membrane. It localises to the cell membrane. It is found in the endosome membrane. Functionally, regulates cellular transport and efflux of cholesterol. Plays a role in phosphatidylinositol-4-phophate (PI4P) turnover at the neuronal membrane. Binds via its PH domain PI4P, phosphatidylinositol-4,5-diphosphate, phosphatidylinositol-3,4,5-triphosphate, and phosphatidic acid. Weakly binds 25-hydroxycholesterol. This chain is Oxysterol-binding protein-related protein 6 (Osbpl6), found in Mus musculus (Mouse).